The chain runs to 659 residues: 4-alpha-glucanotransferase (659 aa).

Glutamate 123 functions as the Nucleophile in the catalytic mechanism. Aspartate 214 acts as the Proton donor in catalysis.

It belongs to the glycosyl hydrolase 57 family. As to quaternary structure, homodimer.

It carries out the reaction Transfers a segment of a (1-&gt;4)-alpha-D-glucan to a new position in an acceptor, which may be glucose or a (1-&gt;4)-alpha-D-glucan.. Inhibited by p-chloromercuribenzoic acid, monoiodoacetic acid, mercury and nickel ions. Catalyzes the transglycosylation of maltooligosaccharides, yielding maltooligosaccharides of various lengths and glucose. Maltose and glucose can be used as acceptors in the transfer reaction. The chain is 4-alpha-glucanotransferase (jgt) from Thermococcus litoralis (strain ATCC 51850 / DSM 5473 / JCM 8560 / NS-C).